Reading from the N-terminus, the 639-residue chain is Threonine--tRNA ligase (639 aa).

A TGS domain is found at 1–61 (MATVRLPDGK…DGGGELEFVT (61 aa)). Positions 239 to 536 (DHRRLGRELG…LIEHYAGAFP (298 aa)) are catalytic. C333, H384, and H513 together coordinate Zn(2+).

This sequence belongs to the class-II aminoacyl-tRNA synthetase family. As to quaternary structure, homodimer. Requires Zn(2+) as cofactor.

It localises to the cytoplasm. The catalysed reaction is tRNA(Thr) + L-threonine + ATP = L-threonyl-tRNA(Thr) + AMP + diphosphate + H(+). Its function is as follows. Catalyzes the attachment of threonine to tRNA(Thr) in a two-step reaction: L-threonine is first activated by ATP to form Thr-AMP and then transferred to the acceptor end of tRNA(Thr). Also edits incorrectly charged L-seryl-tRNA(Thr). In Rubrobacter xylanophilus (strain DSM 9941 / JCM 11954 / NBRC 16129 / PRD-1), this protein is Threonine--tRNA ligase.